The following is a 236-amino-acid chain: Uridylate kinase (236 aa).

Residue K10–G13 coordinates ATP. G52 serves as a coordination point for UMP. 2 residues coordinate ATP: G53 and R57. UMP contacts are provided by residues D72 and T133 to T140. The ATP site is built by T160, Y166, and D169.

Belongs to the UMP kinase family. Homohexamer.

It localises to the cytoplasm. The enzyme catalyses UMP + ATP = UDP + ADP. It participates in pyrimidine metabolism; CTP biosynthesis via de novo pathway; UDP from UMP (UMPK route): step 1/1. With respect to regulation, inhibited by UTP. Functionally, catalyzes the reversible phosphorylation of UMP to UDP. This is Uridylate kinase from Bacteroides fragilis (strain ATCC 25285 / DSM 2151 / CCUG 4856 / JCM 11019 / LMG 10263 / NCTC 9343 / Onslow / VPI 2553 / EN-2).